Consider the following 182-residue polypeptide: U1 small nuclear ribonucleoprotein C (182 aa).

The segment at 4 to 36 (YLCDYCQVWLTHDSQSVRKAHNAGRAHIQNVQD) adopts a Matrin-type zinc-finger fold. Positions 129–182 (PQTTASSNTQLTQQQQSLPQTNEHQRARTHSNANNHFTKTHHQGQRSHQRFVRA) are disordered. The segment covering 130–150 (QTTASSNTQLTQQQQSLPQTN) has biased composition (low complexity). Over residues 166–182 (TKTHHQGQRSHQRFVRA) the composition is skewed to basic residues.

This sequence belongs to the U1 small nuclear ribonucleoprotein C family. In terms of assembly, U1 snRNP is composed of the 7 core Sm proteins smb1, smd1, smd2, smd3, sme1, smf1 and smg1 (Sm proteins B, D1, D2, D3, E, F and G, respectively) that assemble in a heptameric protein ring on the Sm site of the small nuclear RNA to form the core snRNP, and at least 9 U1 snRNP-specific proteins usp101/U1-70K, usp102/U1-A, usp103/U1-C, usp106/LUC7, usp105/PRP39, usp104/PRP40, usp107/U1-H, usp108/U1-J and usp109/U1-L. usp103/U1-C interacts with U1 snRNA and the 5' splice-site region of the pre-mRNA.

Its subcellular location is the nucleus. Component of the spliceosomal U1 snRNP, which is essential for recognition of the pre-mRNA 5' splice-site and the subsequent assembly of the spliceosome. usp103/U1-C is directly involved in initial 5' splice-site recognition for both constitutive and regulated alternative splicing. The interaction with the 5' splice-site seems to precede base-pairing between the pre-mRNA and the U1 snRNA. Stimulates commitment or early (E) complex formation by stabilizing the base pairing of the 5' end of the U1 snRNA and the 5' splice-site region. The protein is U1 small nuclear ribonucleoprotein C (usp103) of Schizosaccharomyces pombe (strain 972 / ATCC 24843) (Fission yeast).